The sequence spans 360 residues: mRNA cap guanine-N(7) methyltransferase (360 aa).

The disordered stretch occupies residues 1–62; it reads MSSSNSRVHE…NRHENNGNAQ (62 aa). The span at 7–19 shows a compositional bias: basic and acidic residues; the sequence is RVHEEQPPTENRR. An mRNA cap 0 methyltransferase domain is found at 83–358; sequence SPIIQLKRFN…FYLAFAFEKR (276 aa). An mRNA-binding site is contributed by 92–93; the sequence is NN. Positions 96, 118, 140, 168, 191, and 196 each coordinate S-adenosyl-L-methionine.

The protein belongs to the class I-like SAM-binding methyltransferase superfamily. mRNA cap 0 methyltransferase family. In terms of assembly, interacts with cdk9.

Its subcellular location is the nucleus. The catalysed reaction is a 5'-end (5'-triphosphoguanosine)-ribonucleoside in mRNA + S-adenosyl-L-methionine = a 5'-end (N(7)-methyl 5'-triphosphoguanosine)-ribonucleoside in mRNA + S-adenosyl-L-homocysteine. In terms of biological role, responsible for methylating the 5'-cap structure of mRNAs. The protein is mRNA cap guanine-N(7) methyltransferase (pcm1) of Schizosaccharomyces pombe (strain 972 / ATCC 24843) (Fission yeast).